The chain runs to 96 residues: Protein RnfH (96 aa).

This sequence belongs to the UPF0125 (RnfH) family.

This is Protein RnfH from Escherichia coli O127:H6 (strain E2348/69 / EPEC).